Consider the following 331-residue polypeptide: Ketol-acid reductoisomerase (NADP(+)) (331 aa).

A KARI N-terminal Rossmann domain is found at 2 to 182; sequence AKIYTDKDAS…GATRAGVIET (181 aa). Residues 25-28, Arg-48, Ser-53, and 83-86 each bind NADP(+); these read YGIQ and DMEQ. The active site involves His-108. Residue Gly-134 participates in NADP(+) binding. A KARI C-terminal knotted domain is found at 183–328; it reads TFAEETETDL…AEMRKLLFGR (146 aa). Mg(2+)-binding residues include Asp-191, Glu-195, Glu-227, and Glu-231. Ser-252 provides a ligand contact to substrate.

This sequence belongs to the ketol-acid reductoisomerase family. The cofactor is Mg(2+).

The catalysed reaction is (2R)-2,3-dihydroxy-3-methylbutanoate + NADP(+) = (2S)-2-acetolactate + NADPH + H(+). It carries out the reaction (2R,3R)-2,3-dihydroxy-3-methylpentanoate + NADP(+) = (S)-2-ethyl-2-hydroxy-3-oxobutanoate + NADPH + H(+). It functions in the pathway amino-acid biosynthesis; L-isoleucine biosynthesis; L-isoleucine from 2-oxobutanoate: step 2/4. The protein operates within amino-acid biosynthesis; L-valine biosynthesis; L-valine from pyruvate: step 2/4. Functionally, involved in the biosynthesis of branched-chain amino acids (BCAA). Catalyzes an alkyl-migration followed by a ketol-acid reduction of (S)-2-acetolactate (S2AL) to yield (R)-2,3-dihydroxy-isovalerate. In the isomerase reaction, S2AL is rearranged via a Mg-dependent methyl migration to produce 3-hydroxy-3-methyl-2-ketobutyrate (HMKB). In the reductase reaction, this 2-ketoacid undergoes a metal-dependent reduction by NADPH to yield (R)-2,3-dihydroxy-isovalerate. The polypeptide is Ketol-acid reductoisomerase (NADP(+)) (Pyrobaculum islandicum (strain DSM 4184 / JCM 9189 / GEO3)).